Consider the following 100-residue polypeptide: MIPLSHGLILAAILFVLGLTGMIIRRNLLFMLLGLEIMINASALAFVVAGSYWGHADGQVMYILAVTLAAAEASIGLALLLQLHRRRRTLDIDSVSEMHG.

The next 3 helical transmembrane spans lie at leucine 4–isoleucine 24, leucine 28–valine 48, and valine 60–leucine 80.

It belongs to the complex I subunit 4L family. In terms of assembly, NDH-1 is composed of 13 different subunits. Subunits NuoA, H, J, K, L, M, N constitute the membrane sector of the complex.

Its subcellular location is the cell inner membrane. It catalyses the reaction a quinone + NADH + 5 H(+)(in) = a quinol + NAD(+) + 4 H(+)(out). Its function is as follows. NDH-1 shuttles electrons from NADH, via FMN and iron-sulfur (Fe-S) centers, to quinones in the respiratory chain. The immediate electron acceptor for the enzyme in this species is believed to be ubiquinone. Couples the redox reaction to proton translocation (for every two electrons transferred, four hydrogen ions are translocated across the cytoplasmic membrane), and thus conserves the redox energy in a proton gradient. This is NADH-quinone oxidoreductase subunit K from Sodalis glossinidius (strain morsitans).